The sequence spans 315 residues: Homeobox-leucine zipper protein HAT3 (315 aa).

The disordered stretch occupies residues 140-163 (SCSLGGGSDDEDGSGNGDDSSRKK). Residues 159–218 (SSRKKLRLSKEQALVLEETFKEHSTLNPKQKMALAKQLNLRTRQVEVWFQNRRARTKLKQ) constitute a DNA-binding region (homeobox). Positions 226–247 (LKRCCENLTDENRRLQKEVSEL) are leucine-zipper. A compositionally biased stretch (low complexity) spans 280 to 305 (SSSSVAPPVMNSSSPMGPMSPWAAMP). The interval 280 to 315 (SSSSVAPPVMNSSSPMGPMSPWAAMPLRQRPAAGSH) is disordered.

The protein belongs to the HD-ZIP homeobox family. Class II subfamily.

It is found in the nucleus. Functionally, probable transcription factor. This Arabidopsis thaliana (Mouse-ear cress) protein is Homeobox-leucine zipper protein HAT3 (HAT3).